A 301-amino-acid polypeptide reads, in one-letter code: Prohibitin-2 (301 aa).

Necessary for transcriptional repression regions lie at residues 19 to 49 (VGTALKLLLGAGALAYGVRESVFIVEGGQRA) and 150 to 174 (ASQLITQRAQVSLLIRRELTERAKD). A coiled-coil region spans residues 190–237 (SREYTAAVEAKQVAQQEAQRAQFLVEKAKQEQKQKIVQAEGEATAAKM).

The protein belongs to the prohibitin family. As to quaternary structure, the mitochondrial prohibitin complex consists of two subunits (PHB1 and PHB2), assembled into a membrane-associated ring-shaped supercomplex of approximately 1 mDa.

It localises to the mitochondrion inner membrane. Its subcellular location is the cytoplasm. It is found in the nucleus. The protein resides in the cell membrane. In terms of biological role, protein with pleiotropic attributes mediated in a cell-compartment- and tissue-specific manner, which include the plasma membrane-associated cell signaling functions, mitochondrial chaperone, and transcriptional co-regulator of transcription factors and sex steroid hormones in the nucleus. Its function is as follows. In the mitochondria, together with PHB, forms large ring complexes (prohibitin complexes) in the inner mitochondrial membrane (IMM) and functions as a chaperone protein that stabilizes mitochondrial respiratory enzymes and maintains mitochondrial integrity in the IMM, which is required for mitochondrial morphogenesis, neuronal survival, and normal lifespan. In the nucleus, serves as transcriptional co-regulator. In Gallus gallus (Chicken), this protein is Prohibitin-2 (PHB2).